Reading from the N-terminus, the 180-residue chain is Large ribosomal subunit protein uL15 (180 aa).

The interval 1–62 (MKKERLEQAA…KTAGRGSKGQ (62 aa)) is disordered. Positions 35 to 44 (GAKKEKKRVG) are enriched in basic residues.

Belongs to the universal ribosomal protein uL15 family. Part of the 50S ribosomal subunit.

In terms of biological role, binds to the 23S rRNA. The sequence is that of Large ribosomal subunit protein uL15 from Leptospira borgpetersenii serovar Hardjo-bovis (strain JB197).